The primary structure comprises 307 residues: Thiohydrolase apmlB (307 aa).

It belongs to the polyketide transferase af380 family.

Its function is as follows. Thiohydrolase; part of the gene cluster that mediates the biosynthesis of phaeospelide A, a fungal polyene macrolide with a 34-membered macrolactone ring and an all-trans conjugated hexaene structure. The HR-PKS ApmlA uses acetyl-CoA and malonyl-CoA as its starter and extender units, respectively, and provides the large carbon framework in phaeospelide via 16 cycles of polyketide chain elongation, which is the largest number identified in fungal iterative PKSs thus far. During round 1, the KR domain reduces beta -ketone to an L-oriented hydroxy group, while during later rounds, it provides hydroxy groups in the D-configuration. The characteristic conjugated hexaene moiety is built during the later rounds (10-15), when the KR and DH domains are at work but ER is off. Phylogenetic analysis of the DH domain suggests that a polyene formation is programmed in the DH domain. Finally, the mature ACP-tethered carbon chain is transferred to the serine residue of the thiohydrolase apmlB, followed by intramolecular macrolactonization, generating phaeospelide A. When one elongation cycle during rounds 7-9 is skipped, phaeospelide B is biosynthesized instead. This is Thiohydrolase apmlB from Arthrinium phaeospermum (Gymnosporium phaeospermum).